A 403-amino-acid chain; its full sequence is Alpha-1-antiproteinase F (403 aa).

Positions 1-22 (SAIPRGLLLLAGLCCLVFGIMA) are cleaved as a signal peptide. N-linked (GlcNAc...) asparagine glycosylation is found at asparagine 55, asparagine 92, asparagine 155, asparagine 222, and asparagine 256. The tract at residues 358 to 377 (GATELEITPHSVPQDLFFNK) is RCL.

Belongs to the serpin family.

The protein resides in the secreted. Its function is as follows. Inhibits elastase, chymotrypsin, cathepsin G, plasmin, and trypsin. In Cavia porcellus (Guinea pig), this protein is Alpha-1-antiproteinase F.